The following is a 261-amino-acid chain: Oxidoreductase ptaF (261 aa).

Belongs to the avfA family.

Its pathway is secondary metabolite biosynthesis. Functionally, oxidoreductase; part of the gene cluster that mediates the biosynthesis of pestheic acid, a diphenyl ether which is a biosynthetic precursor of the unique chloropupukeananes. The biosynthesis initiates from condensation of acetate and malonate units catalyzed by the non-reducing PKS ptaA. As the ptaA protein is TE/CLC domain-deficient, hydrolysis and Claisen cyclization of the polyketide could be catalyzed by ptaB containing a beta-lactamase domain. The ptaB protein might hydrolyze the thioester bond between the ACP of ptaA and the intermediate to release atrochrysone carboxylic acid, which is spontaneously dehydrated to form endocrocin anthrone. Endocrocin anthrone is then converted to endocrocin, catalyzed by the anthrone oxygenase ptaC. Spontaneous decarboxylation of endocrocin occurs to generate emodin. An O-methyltransferase (ptaH or ptaI) could methylate emodin to form physcion. PtaJ could then catalyze the oxidative cleavage of physcion, and rotation of the intermediate could then afford desmethylisosulochrin. PtaF, a putative NADH-dependent oxidoreductase, might also participate in the oxidative cleavage step. Desmethylisosulochrin is then transformed by another O-methyltransferase (ptaH or ptaI) to form isosulochrin. Chlorination of isosulochrin by ptaM in the cyclohexadienone B ring then produces chloroisosulochrin. PtaE is responsible for the oxidative coupling reactions of both benzophenones isosulouchrin and chloroisosulochrin to RES-1214-1 and pestheic acid respectively, regardless of chlorination. The polypeptide is Oxidoreductase ptaF (Pestalotiopsis fici (strain W106-1 / CGMCC3.15140)).